Consider the following 193-residue polypeptide: Thymidine kinase (193 aa).

Residues glycine 14–threonine 21 and aspartate 87–histidine 90 each bind ATP. The active-site Proton acceptor is glutamate 88. Positions 147, 150, 185, and 188 each coordinate Zn(2+).

The protein belongs to the thymidine kinase family. In terms of assembly, homotetramer.

It localises to the cytoplasm. It catalyses the reaction thymidine + ATP = dTMP + ADP + H(+). In Roseiflexus sp. (strain RS-1), this protein is Thymidine kinase.